A 548-amino-acid chain; its full sequence is MAKDVKFGIDARKQMMDGVNVLANAVKVTLGPKGRNVVIDKSFGAPAITKDGVSVAKEIELENKFENMGAQLVREVASKTNDVAGDGTTTATVLAQAILVEGMKSVAAGMNPMDLKRGIDKAVAAAVEEIHNISTPADDSKAIAQVGSISANSDTKIGELIAEAMDKVGKKGVITVEEGSGFEDSLEVVEGMQFDRGYISPYFANKQDSLTAEFENPYILLVDKKISNIREIVPLLEQVMQQSKPLLIIAEDVENEALATLVVNNMRGGLKTCAVKAPGFGDRRKAMLQDIAILTGGTVISEEVGMSLETATIEQLGTAKKVTVGKENTVIVDGAGNKADIEARVESINRQIEESTSDYDKEKLQERVAKLSGGVAVIKVGAATETAMKEKKDRVDDALHATRAAVEEGVVPGGGVALVRALNALADLKGDNEDQNAGINILRRAMEAPLRQIVTNAGDEASVVVNEVKNGSGNYGYNAATGVYGDMLEMGILDPAKVSRSALEHAASVAGLMLTTEAMITDKPQSDDPMAGMGGAGMGGMGGMGGMM.

ATP is bound by residues 29-32 (TLGP), lysine 50, 86-90 (DGTTT), glycine 414, 478-480 (NAA), and aspartate 494.

This sequence belongs to the chaperonin (HSP60) family. As to quaternary structure, forms a cylinder of 14 subunits composed of two heptameric rings stacked back-to-back. Interacts with the co-chaperonin GroES.

The protein localises to the cytoplasm. It carries out the reaction ATP + H2O + a folded polypeptide = ADP + phosphate + an unfolded polypeptide.. Together with its co-chaperonin GroES, plays an essential role in assisting protein folding. The GroEL-GroES system forms a nano-cage that allows encapsulation of the non-native substrate proteins and provides a physical environment optimized to promote and accelerate protein folding. The polypeptide is Chaperonin GroEL (Psychrobacter sp. (strain PRwf-1)).